Reading from the N-terminus, the 513-residue chain is DNA damage-binding protein CMR1 (513 aa).

The segment covering 35–45 (RSEAGIEDHRK) has biased composition (basic and acidic residues). The disordered stretch occupies residues 35–103 (RSEAGIEDHR…TAQNVKQEEE (69 aa)). WD repeat units follow at residues 183–224 (IVHE…PDPE), 237–277 (LFSR…SDEL), 329–369 (LSDK…AKPD), 386–425 (NSRL…PSEL), 438–477 (GRWV…LSHL), and 478–513 (ETST…APQE).

The protein belongs to the WD repeat DDB2/WDR76 family.

Functionally, DNA-binding protein that binds to both single- and double-stranded DNA. Binds preferentially to UV-damaged DNA. May be involved in DNA-metabolic processes. In Eremothecium gossypii (strain ATCC 10895 / CBS 109.51 / FGSC 9923 / NRRL Y-1056) (Yeast), this protein is DNA damage-binding protein CMR1.